The sequence spans 176 residues: PRELI domain-containing protein 2 (176 aa).

Residues 1-175 (MGIAVEARKV…ILRERCGCPF (175 aa)) enclose the PRELI/MSF1 domain.

The protein is PRELI domain-containing protein 2 (prelid2) of Xenopus tropicalis (Western clawed frog).